The following is a 505-amino-acid chain: tRNA (guanine(6)-N(2))-methyltransferase THUMP3 (505 aa).

The disordered stretch occupies residues 145-182 (KAKRRKANQSAGKEKADCGQGDKADEKDGKKKHASSTS). The span at 156-173 (GKEKADCGQGDKADEKDG) shows a compositional bias: basic and acidic residues. Residues 171–287 (KDGKKKHASS…DNEVIVAIAL (117 aa)) enclose the THUMP domain.

The protein belongs to the methyltransferase superfamily. In terms of assembly, part of the heterodimeric THUMPD3-TRM112 methyltransferase complex; this complex forms an active tRNA methyltransferase, where TRMT112 acts as an activator of the catalytic subunit THUMPD3. In terms of tissue distribution, ubiquitously expressed. Abundantly expressed in the testis, also expressed in the brain, heart, kidney, liver, lung, muscle and spleen.

The protein resides in the cytoplasm. It carries out the reaction guanosine(6) in tRNA + S-adenosyl-L-methionine = N(2)-methylguanosine(6) in tRNA + S-adenosyl-L-homocysteine + H(+). The catalysed reaction is guanosine(7) in tRNA + S-adenosyl-L-methionine = N(2)-methylguanosine(7) in tRNA + S-adenosyl-L-homocysteine + H(+). Catalytic subunit of the THUMPD3-TRM112 methyltransferase complex, that specifically mediates the S-adenosyl-L-methionine-dependent N(2)-methylation of guanosine nucleotide at position 6 (m2G6) in tRNAs. This is one of the major tRNA (guanine-N(2))-methyltransferases. Also catalyzes the S-adenosyl-L-methionine-dependent N(2)-methylation of guanosine nucleotide at position 7 of tRNA(Trp). This Mus musculus (Mouse) protein is tRNA (guanine(6)-N(2))-methyltransferase THUMP3.